The following is a 378-amino-acid chain: Erythronate-4-phosphate dehydrogenase (378 aa).

The substrate site is built by Ser45 and Thr66. NAD(+) contacts are provided by Asp146 and Thr175. Residue Arg208 is part of the active site. Asp232 serves as a coordination point for NAD(+). Residue Glu237 is part of the active site. His254 (proton donor) is an active-site residue. An NAD(+)-binding site is contributed by Gly257. Tyr258 contributes to the substrate binding site.

The protein belongs to the D-isomer specific 2-hydroxyacid dehydrogenase family. PdxB subfamily. As to quaternary structure, homodimer.

It is found in the cytoplasm. It catalyses the reaction 4-phospho-D-erythronate + NAD(+) = (R)-3-hydroxy-2-oxo-4-phosphooxybutanoate + NADH + H(+). The protein operates within cofactor biosynthesis; pyridoxine 5'-phosphate biosynthesis; pyridoxine 5'-phosphate from D-erythrose 4-phosphate: step 2/5. Its function is as follows. Catalyzes the oxidation of erythronate-4-phosphate to 3-hydroxy-2-oxo-4-phosphonooxybutanoate. This chain is Erythronate-4-phosphate dehydrogenase, found in Escherichia coli (strain ATCC 8739 / DSM 1576 / NBRC 3972 / NCIMB 8545 / WDCM 00012 / Crooks).